We begin with the raw amino-acid sequence, 367 residues long: tRNA-dihydrouridine(20a/20b) synthase [NAD(P)+] (367 aa).

Residues 45-47 (PMV) and Gln-99 contribute to the FMN site. The Proton donor role is filled by Cys-128. FMN is bound by residues Lys-169, His-197, 231-233 (NGD), and 255-256 (VR).

It belongs to the Dus family. Dus4 subfamily. The cofactor is FMN.

The enzyme catalyses 5,6-dihydrouridine(20a) in tRNA + NADP(+) = uridine(20a) in tRNA + NADPH + H(+). It catalyses the reaction 5,6-dihydrouridine(20a) in tRNA + NAD(+) = uridine(20a) in tRNA + NADH + H(+). The catalysed reaction is 5,6-dihydrouridine(20b) in tRNA + NAD(+) = uridine(20b) in tRNA + NADH + H(+). It carries out the reaction 5,6-dihydrouridine(20b) in tRNA + NADP(+) = uridine(20b) in tRNA + NADPH + H(+). The enzyme catalyses a 5,6-dihydrouridine in mRNA + NAD(+) = a uridine in mRNA + NADH + H(+). It catalyses the reaction a 5,6-dihydrouridine in mRNA + NADP(+) = a uridine in mRNA + NADPH + H(+). Catalyzes the synthesis of dihydrouridine, a modified base found in the D-loop of most tRNAs. Specifically modifies U20a and U20b in cytoplasmic tRNAs. Also able to mediate dihydrouridylation of some mRNAs, thereby affecting their translation. This is tRNA-dihydrouridine(20a/20b) synthase [NAD(P)+] from Saccharomyces cerevisiae (strain ATCC 204508 / S288c) (Baker's yeast).